The chain runs to 148 residues: Glutaredoxin-C10 (148 aa).

Residues 16 to 55 (TLDLTVHPPPPPPLPPPAPSTVSSSTASTSLSFDEEETSE) form a disordered region. Residues 22–34 (HPPPPPPLPPPAP) show a composition bias toward pro residues. Residues 35–47 (STVSSSTASTSLS) are compositionally biased toward low complexity. Residues 55–147 (ESKIGRLISE…PRLVEVGALW (93 aa)) enclose the Glutaredoxin domain. The cysteines at positions 76 and 79 are disulfide-linked.

It belongs to the glutaredoxin family. CC-type subfamily.

It is found in the cytoplasm. Its function is as follows. Has a glutathione-disulfide oxidoreductase activity in the presence of NADPH and glutathione reductase. Reduces low molecular weight disulfides and proteins. This chain is Glutaredoxin-C10 (GRXC10), found in Arabidopsis thaliana (Mouse-ear cress).